The primary structure comprises 215 residues: Cytochrome b6 (215 aa).

A helical transmembrane segment spans residues 32–52 (IFYCLGGITLTCFLVQVATGF). Cys35 is a binding site for heme c. Heme b-binding residues include His86 and His100. A run of 3 helical transmembrane segments spans residues 90–110 (ASMMVLMMILHVFRVYLTGGF), 116–136 (LTWVTGVVLAVLTASFGVTGY), and 186–206 (LHTFVLPLLTAVFMLMHFPMI). Heme b-binding residues include His187 and His202.

The protein belongs to the cytochrome b family. PetB subfamily. As to quaternary structure, the 4 large subunits of the cytochrome b6-f complex are cytochrome b6, subunit IV (17 kDa polypeptide, PetD), cytochrome f and the Rieske protein, while the 4 small subunits are PetG, PetL, PetM and PetN. The complex functions as a dimer. It depends on heme b as a cofactor. Heme c serves as cofactor.

Its subcellular location is the plastid. It is found in the chloroplast thylakoid membrane. Its function is as follows. Component of the cytochrome b6-f complex, which mediates electron transfer between photosystem II (PSII) and photosystem I (PSI), cyclic electron flow around PSI, and state transitions. This Solanum bulbocastanum (Wild potato) protein is Cytochrome b6.